The sequence spans 571 residues: MATLRVSSLFASSSSSLHSNPSVFTKYQSSPKWAFSFPVTPLCSKRSKRIVHCIAGDTLGLTRPNESDAPKISIGAKDTAVVQWQGDLLAIGATENDMARDENSKFKNPLLQQLDSELNGLLSAASSEEDFSGKSGQSVNLRFPGGRISLVGLGSSASSPTSYHSLGQAAAAAARSSQARNIAVALASTDGLSAESKINSASAIATGVVLGSFEDNRFRSESKKSTLESLDILGLGTGPEIERKIKYAEHVCAGVILGRELVNAPANIVTPAVLAEEAKKIASTYSDVISVNILDAEQCKELKMGAYLAVAAAATENPPYFIHLCFKTPTKERKTKLALVGKGLTFDSGGYNLKVGAGSRIELMKNDMGGAAAVLGAAKALGEIRPSRVEVHFIVAACENMISAEGMRPGDIVTASNGKTIEVNNTDAEGRLTLADALIYACNQGVEKIIDLATLTGAIMVALGPSVAGAFTPNDGLANEVVAAAEASGEKLWRMPMEESYWESMKSGVADMINLGPGNGGAITGALFLKQFVDEKVQWLHLDVAGPVWSDEKKNATGYGVSTLVEWVLRN.

The N-terminal 42 residues, 1-42 (MATLRVSSLFASSSSSLHSNPSVFTKYQSSPKWAFSFPVTPL), are a transit peptide targeting the chloroplast. The Mg(2+) site is built by lysine 342 and aspartate 347. Lysine 354 is an active-site residue. Mg(2+) is bound by residues aspartate 367, aspartate 427, and glutamate 429. Arginine 431 is an active-site residue.

The protein belongs to the peptidase M17 family. In terms of assembly, homohexamer (dimer of homotrimers). Mg(2+) is required as a cofactor. In terms of tissue distribution, expressed during floral development. Expressed in healthy and senescent leaves, cotyledons (emergence from seed coats), pistils, sepals, petals, stamens, and floral buds (at protein level).

It is found in the plastid. It localises to the chloroplast. It carries out the reaction Release of an N-terminal amino acid, Xaa-|-Yaa-, in which Xaa is preferably Leu, but may be other amino acids including Pro although not Arg or Lys, and Yaa may be Pro. Amino acid amides and methyl esters are also readily hydrolyzed, but rates on arylamides are exceedingly low.. The enzyme catalyses Release of N-terminal proline from a peptide.. Its function is as follows. Catalyzes the removal of unsubstituted N-terminal amino acids from various peptides. When associated as homohexamer, catalyzes the proteolyzes of Xaa-Leu dipeptides. Possesses leucine aminopeptidase activity against the model substrate leucine-amido methyl coumarin. Presumably involved in the processing and regular turnover of intracellular proteins. Regulates wound signaling and has a role in insect defense. Functions as a molecular chaperone to protect proteins from heat-induced damage. The protein is Leucine aminopeptidase A2, chloroplastic of Solanum lycopersicum (Tomato).